The sequence spans 549 residues: Chaperonin GroEL (549 aa).

ATP is bound by residues 29-32, lysine 50, 86-90, glycine 414, 478-480, and aspartate 494; these read TLGP, DGTTT, and NAA.

It belongs to the chaperonin (HSP60) family. Forms a cylinder of 14 subunits composed of two heptameric rings stacked back-to-back. Interacts with the co-chaperonin GroES.

The protein localises to the cytoplasm. The enzyme catalyses ATP + H2O + a folded polypeptide = ADP + phosphate + an unfolded polypeptide.. Its function is as follows. Together with its co-chaperonin GroES, plays an essential role in assisting protein folding. The GroEL-GroES system forms a nano-cage that allows encapsulation of the non-native substrate proteins and provides a physical environment optimized to promote and accelerate protein folding. The sequence is that of Chaperonin GroEL from Psychrobacter cryohalolentis (strain ATCC BAA-1226 / DSM 17306 / VKM B-2378 / K5).